The primary structure comprises 867 residues: Cadherin-related family member 1 (867 aa).

An N-terminal signal peptide occupies residues methionine 1–alanine 21. Over asparagine 22 to lysine 701 the chain is Extracellular. 6 consecutive Cadherin domains span residues asparagine 36–phenylalanine 135, isoleucine 136–phenylalanine 247, valine 248–phenylalanine 354, proline 360–phenylalanine 473, threonine 474–phenylalanine 577, and tyrosine 574–alanine 689. N-linked (GlcNAc...) asparagine glycans are attached at residues asparagine 58 and asparagine 89. Residues asparagine 288 and asparagine 297 are each glycosylated (N-linked (GlcNAc...) asparagine). The helical transmembrane segment at alanine 702 to threonine 722 threads the bilayer. Residues alanine 723 to phenylalanine 867 lie on the Cytoplasmic side of the membrane. The disordered stretch occupies residues lysine 767–proline 843. A compositionally biased stretch (polar residues) spans glutamate 777–serine 786. The span at proline 790 to alanine 802 shows a compositional bias: pro residues.

Interacts with PROM1. Undergoes proteolytic cleavage; produces a soluble 95 kDa N-terminal fragment and a 25 kDa cell-associated C-terminal fragment. In terms of tissue distribution, expressed in photoreceptor cells of the outer nuclear layer of the retina.

The protein resides in the cell membrane. In terms of biological role, potential calcium-dependent cell-adhesion protein. May be required for the structural integrity of the outer segment (OS) of photoreceptor cells. This chain is Cadherin-related family member 1 (CDHR1), found in Bos taurus (Bovine).